We begin with the raw amino-acid sequence, 245 residues long: Small ribosomal subunit protein uS2 (245 aa).

This sequence belongs to the universal ribosomal protein uS2 family.

In Pseudomonas putida (strain W619), this protein is Small ribosomal subunit protein uS2.